The chain runs to 308 residues: UDP-N-acetylenolpyruvoylglucosamine reductase (308 aa).

The region spanning 35-200 (RVGGPAQVLF…TSARFRGEPM (166 aa)) is the FAD-binding PCMH-type domain. Arginine 180 is a catalytic residue. The segment covering 211–226 (EVQRHRETAQPVREKT) has biased composition (basic and acidic residues). Residues 211-236 (EVQRHRETAQPVREKTGGSTFKNPPG) are disordered. Serine 229 (proton donor) is an active-site residue. Residue glutamate 299 is part of the active site.

The protein belongs to the MurB family. The cofactor is FAD.

The protein resides in the cytoplasm. It carries out the reaction UDP-N-acetyl-alpha-D-muramate + NADP(+) = UDP-N-acetyl-3-O-(1-carboxyvinyl)-alpha-D-glucosamine + NADPH + H(+). It participates in cell wall biogenesis; peptidoglycan biosynthesis. Functionally, cell wall formation. In Rhodopseudomonas palustris (strain BisB18), this protein is UDP-N-acetylenolpyruvoylglucosamine reductase.